A 174-amino-acid polypeptide reads, in one-letter code: RNA pyrophosphohydrolase (174 aa).

The 144-residue stretch at 6-149 (GFRANVGIII…KRDVYRKVMK (144 aa)) folds into the Nudix hydrolase domain. The Nudix box motif lies at 38-59 (GGVDDGESAEEAMYRELYEEVG).

The protein belongs to the Nudix hydrolase family. RppH subfamily. The cofactor is a divalent metal cation.

Accelerates the degradation of transcripts by removing pyrophosphate from the 5'-end of triphosphorylated RNA, leading to a more labile monophosphorylated state that can stimulate subsequent ribonuclease cleavage. This Shewanella sp. (strain ANA-3) protein is RNA pyrophosphohydrolase.